Reading from the N-terminus, the 245-residue chain is 1-(5-phosphoribosyl)-5-[(5-phosphoribosylamino)methylideneamino] imidazole-4-carboxamide isomerase (245 aa).

Asp7 functions as the Proton acceptor in the catalytic mechanism. Asp129 (proton donor) is an active-site residue.

The protein belongs to the HisA/HisF family.

Its subcellular location is the cytoplasm. The catalysed reaction is 1-(5-phospho-beta-D-ribosyl)-5-[(5-phospho-beta-D-ribosylamino)methylideneamino]imidazole-4-carboxamide = 5-[(5-phospho-1-deoxy-D-ribulos-1-ylimino)methylamino]-1-(5-phospho-beta-D-ribosyl)imidazole-4-carboxamide. It functions in the pathway amino-acid biosynthesis; L-histidine biosynthesis; L-histidine from 5-phospho-alpha-D-ribose 1-diphosphate: step 4/9. The chain is 1-(5-phosphoribosyl)-5-[(5-phosphoribosylamino)methylideneamino] imidazole-4-carboxamide isomerase from Escherichia coli O7:K1 (strain IAI39 / ExPEC).